The chain runs to 283 residues: Protein/nucleic acid deglycase HchA (283 aa).

Positions 86, 91, and 123 each coordinate Zn(2+). Catalysis depends on Cys-185, which acts as the Nucleophile.

Belongs to the peptidase C56 family. HchA subfamily. In terms of assembly, homodimer.

The protein resides in the cytoplasm. It carries out the reaction N(omega)-(1-hydroxy-2-oxopropyl)-L-arginyl-[protein] + H2O = lactate + L-arginyl-[protein] + H(+). It catalyses the reaction N(6)-(1-hydroxy-2-oxopropyl)-L-lysyl-[protein] + H2O = lactate + L-lysyl-[protein] + H(+). The catalysed reaction is S-(1-hydroxy-2-oxopropyl)-L-cysteinyl-[protein] + H2O = lactate + L-cysteinyl-[protein] + H(+). The enzyme catalyses N(omega)-(1-hydroxy-2-oxoethyl)-L-arginyl-[protein] + H2O = L-arginyl-[protein] + glycolate + H(+). It carries out the reaction N(6)-(1-hydroxy-2-oxoethyl)-L-lysyl-[protein] + H2O = glycolate + L-lysyl-[protein] + H(+). It catalyses the reaction S-(1-hydroxy-2-oxoethyl)-L-cysteinyl-[protein] + H2O = glycolate + L-cysteinyl-[protein] + H(+). The catalysed reaction is N(2)-(1-hydroxy-2-oxopropyl)-dGTP + H2O = lactate + dGTP + H(+). The enzyme catalyses N(2)-(1-hydroxy-2-oxopropyl)-GTP + H2O = lactate + GTP + H(+). It carries out the reaction N(2)-(1-hydroxy-2-oxopropyl)-GDP + H2O = lactate + GDP + H(+). It catalyses the reaction N(2)-(1-hydroxy-2-oxopropyl)-GMP + H2O = lactate + GMP + H(+). The catalysed reaction is N(2)-(1-hydroxy-2-oxoethyl)-dGTP + H2O = dGTP + glycolate + H(+). The enzyme catalyses N(2)-(1-hydroxy-2-oxoethyl)-GTP + H2O = glycolate + GTP + H(+). It carries out the reaction N(2)-(1-hydroxy-2-oxoethyl)-GDP + H2O = glycolate + GDP + H(+). It catalyses the reaction N(2)-(1-hydroxy-2-oxoethyl)-GMP + H2O = glycolate + GMP + H(+). The catalysed reaction is an N(2)-(1-hydroxy-2-oxopropyl)-guanosine in RNA + H2O = a guanosine in RNA + lactate + H(+). The enzyme catalyses an N(2)-(1-hydroxy-2-oxopropyl)-2'-deoxyguanosine in DNA + H2O = a 2'-deoxyguanosine in DNA + lactate + H(+). It carries out the reaction an N(2)-(1-hydroxy-2-oxoethyl)-guanosine in RNA + H2O = a guanosine in RNA + glycolate + H(+). It catalyses the reaction an N(2)-(1-hydroxy-2-oxoethyl)-2'-deoxyguanosine in DNA + H2O = a 2'-deoxyguanosine in DNA + glycolate + H(+). Protein and nucleotide deglycase that catalyzes the deglycation of the Maillard adducts formed between amino groups of proteins or nucleotides and reactive carbonyl groups of glyoxals. Thus, functions as a protein deglycase that repairs methylglyoxal- and glyoxal-glycated proteins, and releases repaired proteins and lactate or glycolate, respectively. Deglycates cysteine, arginine and lysine residues in proteins, and thus reactivates these proteins by reversing glycation by glyoxals. Acts on early glycation intermediates (hemithioacetals and aminocarbinols), preventing the formation of Schiff bases and advanced glycation endproducts (AGE). Also functions as a nucleotide deglycase able to repair glycated guanine in the free nucleotide pool (GTP, GDP, GMP, dGTP) and in DNA and RNA. Is thus involved in a major nucleotide repair system named guanine glycation repair (GG repair), dedicated to reversing methylglyoxal and glyoxal damage via nucleotide sanitization and direct nucleic acid repair. Plays an important role in protecting cells from carbonyl stress. The polypeptide is Protein/nucleic acid deglycase HchA (Escherichia coli O8 (strain IAI1)).